A 256-amino-acid polypeptide reads, in one-letter code: MIKRVNKLVLGISLLFLVISIAAGCGIGKEAEIKKSFEKTLSMYPIKNLEDLYDKEGYRDDEFDKNDKGTWTISSEMAIQKKGEALNIKGMVLKLNRNTRSAKGFYYVNAIKKDEDGRPQDNQIEYPVKMVDNKIIPTKEIKDDNIKKEIENFKFLVQYGNFKDLSKYKDGDISYNPEVPSYSAKYQLTNDDYNVKQLRKRYNIPTNKAPKLLLKGTGNLKGSSVGYKDIEFTFVEKKGENIYFSDSLHLKPSEDK.

Residues 1–24 (MIKRVNKLVLGISLLFLVISIAAG) form the signal peptide. The N-palmitoyl cysteine moiety is linked to residue Cys-25. Residue Cys-25 is the site of S-diacylglycerol cysteine attachment.

Belongs to the staphylococcal tandem lipoprotein family.

It is found in the cell membrane. This is an uncharacterized protein from Staphylococcus aureus.